The primary structure comprises 368 residues: 2-aminoethylphosphonate--pyruvate transaminase (368 aa).

K192 is subject to N6-(pyridoxal phosphate)lysine.

This sequence belongs to the class-V pyridoxal-phosphate-dependent aminotransferase family. PhnW subfamily. Homodimer. It depends on pyridoxal 5'-phosphate as a cofactor.

It catalyses the reaction (2-aminoethyl)phosphonate + pyruvate = phosphonoacetaldehyde + L-alanine. Involved in phosphonate degradation. This is 2-aminoethylphosphonate--pyruvate transaminase from Pseudomonas putida (strain GB-1).